The chain runs to 54 residues: Large ribosomal subunit protein bL33 (54 aa).

It belongs to the bacterial ribosomal protein bL33 family.

This is Large ribosomal subunit protein bL33 from Legionella pneumophila (strain Lens).